The chain runs to 299 residues: UDP-N-acetylenolpyruvoylglucosamine reductase (299 aa).

The FAD-binding PCMH-type domain occupies 28-193 (KVGGPADILA…LSAKFELQAG (166 aa)). Arginine 172 is a catalytic residue. The active-site Proton donor is the serine 222. Glutamate 292 is an active-site residue.

It depends on FAD as a cofactor.

It localises to the cytoplasm. It catalyses the reaction UDP-N-acetyl-alpha-D-muramate + NADP(+) = UDP-N-acetyl-3-O-(1-carboxyvinyl)-alpha-D-glucosamine + NADPH + H(+). Its pathway is cell wall biogenesis; peptidoglycan biosynthesis. In terms of biological role, cell wall formation. The chain is UDP-N-acetylenolpyruvoylglucosamine reductase from Lactococcus lactis subsp. cremoris (strain MG1363).